A 489-amino-acid chain; its full sequence is Serine/threonine-protein kinase BSK3 (489 aa).

A lipid anchor (N-myristoyl glycine) is attached at Gly-2. A Protein kinase domain is found at 58 to 324 (EYIVSEHGEK…ETEVLSHVLM (267 aa)). ATP contacts are provided by residues 64–72 (HGEKAPNVV) and Lys-86. Asp-180 acts as the Proton acceptor in catalysis. Phosphoserine is present on Ser-212.

It belongs to the protein kinase superfamily. Ser/Thr protein kinase family. In terms of assembly, interacts with BRI1. Post-translationally, phosphorylated by BRI1 upon brassinolide (BL) treatment. Phosphorylated by ASK7/BIN2 and ASK9/BIL2.

It is found in the cell membrane. It carries out the reaction L-seryl-[protein] + ATP = O-phospho-L-seryl-[protein] + ADP + H(+). The enzyme catalyses L-threonyl-[protein] + ATP = O-phospho-L-threonyl-[protein] + ADP + H(+). Functionally, probable serine/threonine kinase that acts as a positive regulator of brassinosteroid (BR) signaling downstream of the receptor kinase BRI1. Mediates signal transduction from BRI1 by functioning as substrate of BRI1. Functions redundantly with BSK4, BSK6, BSK7 and BSK8. The chain is Serine/threonine-protein kinase BSK3 from Arabidopsis thaliana (Mouse-ear cress).